The sequence spans 195 residues: uncharacterized protein (195 aa).

The tract at residues 86–158 is disordered; it reads LPSEGGWTSG…PAPVSGEPPE (73 aa).

This is an uncharacterized protein from Homo sapiens (Human).